The primary structure comprises 67 residues: Potassium channel toxin alpha-KTx 6.16 (67 aa).

The first 24 residues, 1 to 24 (MNLKLALVLLLTVINVGMLPGATS), serve as a signal peptide directing secretion. Intrachain disulfides connect C34-C55, C40-C60, C44-C62, and C50-C65.

It belongs to the short scorpion toxin superfamily. Potassium channel inhibitor family. Alpha-KTx 06 subfamily. Expressed by the venom gland.

The protein localises to the secreted. Its function is as follows. Inhibits voltage-gated potassium channels. In Opisthacanthus cayaporum (South American scorpion), this protein is Potassium channel toxin alpha-KTx 6.16.